The primary structure comprises 721 residues: 1,4-alpha-glucan branching enzyme GlgB (721 aa).

Catalysis depends on aspartate 404, which acts as the Nucleophile. The active-site Proton donor is glutamate 457.

It belongs to the glycosyl hydrolase 13 family. GlgB subfamily. Monomer.

It carries out the reaction Transfers a segment of a (1-&gt;4)-alpha-D-glucan chain to a primary hydroxy group in a similar glucan chain.. Its pathway is glycan biosynthesis; glycogen biosynthesis. Functionally, catalyzes the formation of the alpha-1,6-glucosidic linkages in glycogen by scission of a 1,4-alpha-linked oligosaccharide from growing alpha-1,4-glucan chains and the subsequent attachment of the oligosaccharide to the alpha-1,6 position. The protein is 1,4-alpha-glucan branching enzyme GlgB of Novosphingobium aromaticivorans (strain ATCC 700278 / DSM 12444 / CCUG 56034 / CIP 105152 / NBRC 16084 / F199).